Here is a 497-residue protein sequence, read N- to C-terminus: Guanosine-5'-triphosphate,3'-diphosphate pyrophosphatase (497 aa).

Belongs to the GppA/Ppx family. GppA subfamily.

The catalysed reaction is guanosine 3'-diphosphate 5'-triphosphate + H2O = guanosine 3',5'-bis(diphosphate) + phosphate + H(+). It functions in the pathway purine metabolism; ppGpp biosynthesis; ppGpp from GTP: step 2/2. Functionally, catalyzes the conversion of pppGpp to ppGpp. Guanosine pentaphosphate (pppGpp) is a cytoplasmic signaling molecule which together with ppGpp controls the 'stringent response', an adaptive process that allows bacteria to respond to amino acid starvation, resulting in the coordinated regulation of numerous cellular activities. This Aliivibrio fischeri (strain MJ11) (Vibrio fischeri) protein is Guanosine-5'-triphosphate,3'-diphosphate pyrophosphatase.